The following is a 498-amino-acid chain: Glutamyl-tRNA(Gln) amidotransferase subunit A (498 aa).

Residues K80 and S155 each act as charge relay system in the active site. Residues S132 to S159 are disordered. Catalysis depends on S179, which acts as the Acyl-ester intermediate.

It belongs to the amidase family. GatA subfamily. As to quaternary structure, heterotrimer of A, B and C subunits.

It carries out the reaction L-glutamyl-tRNA(Gln) + L-glutamine + ATP + H2O = L-glutaminyl-tRNA(Gln) + L-glutamate + ADP + phosphate + H(+). Its function is as follows. Allows the formation of correctly charged Gln-tRNA(Gln) through the transamidation of misacylated Glu-tRNA(Gln) in organisms which lack glutaminyl-tRNA synthetase. The reaction takes place in the presence of glutamine and ATP through an activated gamma-phospho-Glu-tRNA(Gln). This chain is Glutamyl-tRNA(Gln) amidotransferase subunit A, found in Thermobifida fusca (strain YX).